The sequence spans 81 residues: Small ribosomal subunit protein uS17 (81 aa).

This sequence belongs to the universal ribosomal protein uS17 family. In terms of assembly, part of the 30S ribosomal subunit.

One of the primary rRNA binding proteins, it binds specifically to the 5'-end of 16S ribosomal RNA. The protein is Small ribosomal subunit protein uS17 of Methylocella silvestris (strain DSM 15510 / CIP 108128 / LMG 27833 / NCIMB 13906 / BL2).